Reading from the N-terminus, the 174-residue chain is ATP-dependent protease subunit HslV (174 aa).

T2 is an active-site residue. Positions 157, 160, and 163 each coordinate Na(+).

Belongs to the peptidase T1B family. HslV subfamily. As to quaternary structure, a double ring-shaped homohexamer of HslV is capped on each side by a ring-shaped HslU homohexamer. The assembly of the HslU/HslV complex is dependent on binding of ATP.

Its subcellular location is the cytoplasm. The enzyme catalyses ATP-dependent cleavage of peptide bonds with broad specificity.. With respect to regulation, allosterically activated by HslU binding. Protease subunit of a proteasome-like degradation complex believed to be a general protein degrading machinery. The protein is ATP-dependent protease subunit HslV of Shewanella baltica (strain OS195).